A 163-amino-acid chain; its full sequence is NADH-quinone oxidoreductase subunit I (163 aa).

4Fe-4S ferredoxin-type domains lie at 55–84 (RRYE…IESE) and 94–123 (TQYD…ETRV). [4Fe-4S] cluster-binding residues include Cys64, Cys67, Cys70, Cys74, Cys103, Cys106, Cys109, and Cys113.

It belongs to the complex I 23 kDa subunit family. As to quaternary structure, NDH-1 is composed of 14 different subunits. Subunits NuoA, H, J, K, L, M, N constitute the membrane sector of the complex. It depends on [4Fe-4S] cluster as a cofactor.

It localises to the cell inner membrane. The catalysed reaction is a quinone + NADH + 5 H(+)(in) = a quinol + NAD(+) + 4 H(+)(out). NDH-1 shuttles electrons from NADH, via FMN and iron-sulfur (Fe-S) centers, to quinones in the respiratory chain. The immediate electron acceptor for the enzyme in this species is believed to be ubiquinone. Couples the redox reaction to proton translocation (for every two electrons transferred, four hydrogen ions are translocated across the cytoplasmic membrane), and thus conserves the redox energy in a proton gradient. This Hydrogenovibrio crunogenus (strain DSM 25203 / XCL-2) (Thiomicrospira crunogena) protein is NADH-quinone oxidoreductase subunit I.